Reading from the N-terminus, the 546-residue chain is 2-isopropylmalate synthase (546 aa).

Positions 8 to 271 (ILIFDTTLRD…NSFFGRSSDS (264 aa)) constitute a Pyruvate carboxyltransferase domain. Mn(2+) is bound by residues Asp-17, His-208, His-210, and Asn-244. The interval 408-546 (QLSHVQVSCG…EKKVFSNPKN (139 aa)) is regulatory domain.

The protein belongs to the alpha-IPM synthase/homocitrate synthase family. LeuA type 1 subfamily. In terms of assembly, homodimer. Requires Mn(2+) as cofactor.

Its subcellular location is the cytoplasm. It carries out the reaction 3-methyl-2-oxobutanoate + acetyl-CoA + H2O = (2S)-2-isopropylmalate + CoA + H(+). It functions in the pathway amino-acid biosynthesis; L-leucine biosynthesis; L-leucine from 3-methyl-2-oxobutanoate: step 1/4. Functionally, catalyzes the condensation of the acetyl group of acetyl-CoA with 3-methyl-2-oxobutanoate (2-ketoisovalerate) to form 3-carboxy-3-hydroxy-4-methylpentanoate (2-isopropylmalate). The protein is 2-isopropylmalate synthase of Prochlorococcus marinus (strain MIT 9515).